The following is a 124-amino-acid chain: Fluoride-specific ion channel FluC (124 aa).

4 helical membrane passes run 3–23 (VLLI…VSNL), 34–54 (IGTL…FIFI), 68–88 (LLLI…IETF), and 100–120 (ALNV…GVLI). Glycine 75 and threonine 78 together coordinate Na(+).

It belongs to the fluoride channel Fluc/FEX (TC 1.A.43) family.

The protein resides in the cell inner membrane. The enzyme catalyses fluoride(in) = fluoride(out). Its activity is regulated as follows. Na(+) is not transported, but it plays an essential structural role and its presence is essential for fluoride channel function. Its function is as follows. Fluoride-specific ion channel. Important for reducing fluoride concentration in the cell, thus reducing its toxicity. The sequence is that of Fluoride-specific ion channel FluC from Coxiella burnetii (strain CbuK_Q154) (Coxiella burnetii (strain Q154)).